Here is a 453-residue protein sequence, read N- to C-terminus: Tubulin alpha-1 chain (453 aa).

Residues Gln11, Glu71, Gly144, Thr145, Thr179, Asn206, and Asn228 each contribute to the GTP site. Glu71 lines the Mg(2+) pocket. Glu254 is an active-site residue. Residues 433 to 453 form a disordered region; sequence EEVGAETADGDGEEEEFGEEY.

The protein belongs to the tubulin family. Dimer of alpha and beta chains. A typical microtubule is a hollow water-filled tube with an outer diameter of 25 nm and an inner diameter of 15 nM. Alpha-beta heterodimers associate head-to-tail to form protofilaments running lengthwise along the microtubule wall with the beta-tubulin subunit facing the microtubule plus end conferring a structural polarity. Microtubules usually have 13 protofilaments but different protofilament numbers can be found in some organisms and specialized cells. The cofactor is Mg(2+). Post-translationally, undergoes a tyrosination/detyrosination cycle, the cyclic removal and re-addition of a C-terminal tyrosine residue by the enzymes tubulin tyrosine carboxypeptidase (TTCP) and tubulin tyrosine ligase (TTL), respectively.

Its subcellular location is the cytoplasm. The protein localises to the cytoskeleton. The enzyme catalyses GTP + H2O = GDP + phosphate + H(+). In terms of biological role, tubulin is the major constituent of microtubules, a cylinder consisting of laterally associated linear protofilaments composed of alpha- and beta-tubulin heterodimers. Microtubules grow by the addition of GTP-tubulin dimers to the microtubule end, where a stabilizing cap forms. Below the cap, tubulin dimers are in GDP-bound state, owing to GTPase activity of alpha-tubulin. This chain is Tubulin alpha-1 chain (TUBA1), found in Pelvetia fastigiata (Brown alga).